The chain runs to 168 residues: ATP synthase subunit b (168 aa).

The chain crosses the membrane as a helical span at residues Ala9–Leu29.

This sequence belongs to the ATPase B chain family. In terms of assembly, F-type ATPases have 2 components, F(1) - the catalytic core - and F(0) - the membrane proton channel. F(1) has five subunits: alpha(3), beta(3), gamma(1), delta(1), epsilon(1). F(0) has three main subunits: a(1), b(2) and c(10-14). The alpha and beta chains form an alternating ring which encloses part of the gamma chain. F(1) is attached to F(0) by a central stalk formed by the gamma and epsilon chains, while a peripheral stalk is formed by the delta and b chains.

It is found in the cell membrane. F(1)F(0) ATP synthase produces ATP from ADP in the presence of a proton or sodium gradient. F-type ATPases consist of two structural domains, F(1) containing the extramembraneous catalytic core and F(0) containing the membrane proton channel, linked together by a central stalk and a peripheral stalk. During catalysis, ATP synthesis in the catalytic domain of F(1) is coupled via a rotary mechanism of the central stalk subunits to proton translocation. Functionally, component of the F(0) channel, it forms part of the peripheral stalk, linking F(1) to F(0). In Bacillus cytotoxicus (strain DSM 22905 / CIP 110041 / 391-98 / NVH 391-98), this protein is ATP synthase subunit b.